A 181-amino-acid polypeptide reads, in one-letter code: Calmodulin-like protein 6 (181 aa).

EF-hand domains are found at residues 33–68 (EQIKEYKGVFEMFDEEGNGEVKTGELEWLMSLLGIN), 69–104 (PTKSELASMAKDVDRDNKGFFNCDGFLALMGVYHEK), 107–142 (NQESELRAAFRVFDKEGKGYIDWNTLKYVLMNAGEP), and 143–178 (LNEVEAEQMMKEADKDGDRTIDYEEFVAMMTGESFK). Ca(2+) contacts are provided by aspartate 156, aspartate 158, aspartate 160, threonine 162, and glutamate 167.

This sequence belongs to the calmodulin family. Calglandulin subfamily. As to expression, expressed in prostate, thymus, heart, skeleton muscle, bone marrow and ovary.

Its subcellular location is the cytoplasm. It localises to the nucleus. The sequence is that of Calmodulin-like protein 6 (CALML6) from Homo sapiens (Human).